The chain runs to 387 residues: 1-deoxy-D-xylulose 5-phosphate reductoisomerase (387 aa).

The NADPH site is built by T11, G12, S13, I14, G37, R39, and N123. K124 contacts 1-deoxy-D-xylulose 5-phosphate. E125 provides a ligand contact to NADPH. D147 serves as a coordination point for Mn(2+). 4 residues coordinate 1-deoxy-D-xylulose 5-phosphate: S148, E149, S173, and H196. E149 serves as a coordination point for Mn(2+). G202 lines the NADPH pocket. 1-deoxy-D-xylulose 5-phosphate-binding residues include S209, N214, K215, and E218. E218 lines the Mn(2+) pocket.

This sequence belongs to the DXR family. The cofactor is Mg(2+). Mn(2+) is required as a cofactor.

It carries out the reaction 2-C-methyl-D-erythritol 4-phosphate + NADP(+) = 1-deoxy-D-xylulose 5-phosphate + NADPH + H(+). It participates in isoprenoid biosynthesis; isopentenyl diphosphate biosynthesis via DXP pathway; isopentenyl diphosphate from 1-deoxy-D-xylulose 5-phosphate: step 1/6. Its function is as follows. Catalyzes the NADPH-dependent rearrangement and reduction of 1-deoxy-D-xylulose-5-phosphate (DXP) to 2-C-methyl-D-erythritol 4-phosphate (MEP). This chain is 1-deoxy-D-xylulose 5-phosphate reductoisomerase, found in Corynebacterium diphtheriae (strain ATCC 700971 / NCTC 13129 / Biotype gravis).